The chain runs to 214 residues: Leucyl/phenylalanyl-tRNA--protein transferase (214 aa).

This sequence belongs to the L/F-transferase family.

The protein resides in the cytoplasm. It catalyses the reaction N-terminal L-lysyl-[protein] + L-leucyl-tRNA(Leu) = N-terminal L-leucyl-L-lysyl-[protein] + tRNA(Leu) + H(+). The catalysed reaction is N-terminal L-arginyl-[protein] + L-leucyl-tRNA(Leu) = N-terminal L-leucyl-L-arginyl-[protein] + tRNA(Leu) + H(+). The enzyme catalyses L-phenylalanyl-tRNA(Phe) + an N-terminal L-alpha-aminoacyl-[protein] = an N-terminal L-phenylalanyl-L-alpha-aminoacyl-[protein] + tRNA(Phe). Functionally, functions in the N-end rule pathway of protein degradation where it conjugates Leu, Phe and, less efficiently, Met from aminoacyl-tRNAs to the N-termini of proteins containing an N-terminal arginine or lysine. The chain is Leucyl/phenylalanyl-tRNA--protein transferase from Cereibacter sphaeroides (strain KD131 / KCTC 12085) (Rhodobacter sphaeroides).